A 340-amino-acid polypeptide reads, in one-letter code: Photosystem II protein D1 (340 aa).

Helical transmembrane passes span 25-42, 114-129, and 138-152; these read YIGW…LATV, HFFL…EWEF, and WIFV…AAAA. Histidine 114 is a binding site for chlorophyll a. Pheophytin a is bound at residue tryptophan 122. [CaMn4O5] cluster-binding residues include aspartate 166 and glutamate 185. Residues 193–214 traverse the membrane as a helical segment; the sequence is FHILGVAGVFGGSLFSAMHGSL. Histidine 194 provides a ligand contact to chlorophyll a. Residues histidine 211 and 260 to 261 contribute to the a quinone site; that span reads SF. Residue histidine 211 coordinates Fe cation. Fe cation is bound at residue histidine 268. The helical transmembrane segment at 270–284 threads the bilayer; that stretch reads FLAAWPVIGIWFTSL. Histidine 328, glutamate 329, aspartate 338, and alanine 340 together coordinate [CaMn4O5] cluster.

This sequence belongs to the reaction center PufL/M/PsbA/D family. PSII is composed of 1 copy each of membrane proteins PsbA, PsbB, PsbC, PsbD, PsbE, PsbF, PsbH, PsbI, PsbJ, PsbK, PsbL, PsbM, PsbT, PsbX, PsbY, PsbZ, Psb30/Ycf12, at least 3 peripheral proteins of the oxygen-evolving complex and a large number of cofactors. It forms dimeric complexes. Requires The D1/D2 heterodimer binds P680, chlorophylls that are the primary electron donor of PSII, and subsequent electron acceptors. It shares a non-heme iron and each subunit binds pheophytin, quinone, additional chlorophylls, carotenoids and lipids. D1 provides most of the ligands for the Mn4-Ca-O5 cluster of the oxygen-evolving complex (OEC). There is also a Cl(-1) ion associated with D1 and D2, which is required for oxygen evolution. The PSII complex binds additional chlorophylls, carotenoids and specific lipids. as cofactor. In terms of processing, tyr-157 forms a radical intermediate that is referred to as redox-active TyrZ, YZ or Y-Z.

The protein resides in the plastid. It localises to the chloroplast thylakoid membrane. It catalyses the reaction 2 a plastoquinone + 4 hnu + 2 H2O = 2 a plastoquinol + O2. Functionally, photosystem II (PSII) is a light-driven water:plastoquinone oxidoreductase that uses light energy to abstract electrons from H(2)O, generating O(2) and a proton gradient subsequently used for ATP formation. It consists of a core antenna complex that captures photons, and an electron transfer chain that converts photonic excitation into a charge separation. The D1/D2 (PsbA/PsbD) reaction center heterodimer binds P680, the primary electron donor of PSII as well as several subsequent electron acceptors. This is Photosystem II protein D1 from Amphidinium operculatum (Dinoflagellate).